Consider the following 376-residue polypeptide: Queuine tRNA-ribosyltransferase (376 aa).

The active-site Proton acceptor is the Asp-89. Substrate is bound by residues 89–93 (DSGGF), Asp-143, Gln-187, and Gly-214. The segment at 245–251 (GVGKPQD) is RNA binding. Residue Asp-264 is the Nucleophile of the active site. The segment at 269–273 (TRNAR) is RNA binding; important for wobble base 34 recognition. Zn(2+) contacts are provided by Cys-302, Cys-304, Cys-307, and His-333.

It belongs to the queuine tRNA-ribosyltransferase family. Homodimer. Within each dimer, one monomer is responsible for RNA recognition and catalysis, while the other monomer binds to the replacement base PreQ1. Zn(2+) is required as a cofactor.

It carries out the reaction 7-aminomethyl-7-carbaguanine + guanosine(34) in tRNA = 7-aminomethyl-7-carbaguanosine(34) in tRNA + guanine. It functions in the pathway tRNA modification; tRNA-queuosine biosynthesis. Its function is as follows. Catalyzes the base-exchange of a guanine (G) residue with the queuine precursor 7-aminomethyl-7-deazaguanine (PreQ1) at position 34 (anticodon wobble position) in tRNAs with GU(N) anticodons (tRNA-Asp, -Asn, -His and -Tyr). Catalysis occurs through a double-displacement mechanism. The nucleophile active site attacks the C1' of nucleotide 34 to detach the guanine base from the RNA, forming a covalent enzyme-RNA intermediate. The proton acceptor active site deprotonates the incoming PreQ1, allowing a nucleophilic attack on the C1' of the ribose to form the product. After dissociation, two additional enzymatic reactions on the tRNA convert PreQ1 to queuine (Q), resulting in the hypermodified nucleoside queuosine (7-(((4,5-cis-dihydroxy-2-cyclopenten-1-yl)amino)methyl)-7-deazaguanosine). In Erwinia tasmaniensis (strain DSM 17950 / CFBP 7177 / CIP 109463 / NCPPB 4357 / Et1/99), this protein is Queuine tRNA-ribosyltransferase.